Reading from the N-terminus, the 686-residue chain is Mannan-binding lectin serine protease 2 (686 aa).

The signal sequence occupies residues 1-15 (MRLLTLLGLLCGSVA). The region spanning 16–137 (TPLGPKWPEP…TGFEAFYAAE (122 aa)) is the CUB 1 domain. The Ca(2+) site is built by Glu67, Asp75, Asp120, Ser122, Asn123, Asp138, Ile139, and Glu141. A disulfide bond links Cys72 and Cys90. The region spanning 138 to 181 (DIDECQVAPGEAPTCDHHCHNHLGGFYCSCRAGYVLHRNKRTCS) is the EGF-like; calcium-binding domain. 12 cysteine pairs are disulfide-bonded: Cys142-Cys156, Cys152-Cys165, Cys167-Cys180, Cys184-Cys211, Cys241-Cys259, Cys300-Cys348, Cys328-Cys361, Cys366-Cys412, Cys396-Cys430, Cys434-Cys552, Cys598-Cys618, and Cys629-Cys660. 3 residues coordinate Ca(2+): Asn158, His159, and Gly162. Asn158 bears the (3R)-3-hydroxyasparagine mark. Residues 184–296 (CSGQVFTQRS…TGWKIHYTST (113 aa)) enclose the CUB 2 domain. Sushi domains lie at 298 to 363 (QPCP…ACSI) and 364 to 432 (VDCG…VCEP). The Peptidase S1 domain occupies 445-684 (IYGGQKAKPG…YIPWIENIIS (240 aa)). Active-site charge relay system residues include His483 and Asp532. Residue Ser633 is the Charge relay system of the active site.

It belongs to the peptidase S1 family. As to quaternary structure, homodimer; disulfide-linked. Binds MBL2. Isoform 2 binds to MASP1. Binds SERPING1. Dimerization and MBL2 binding requires calcium ions. Post-translationally, the iron and 2-oxoglutarate dependent 3-hydroxylation of aspartate and asparagine is (R) stereospecific within EGF domains. Activated by cleavage after Arg-444. The uncleaved zymogen is inactive towards synthetic substrates, but has sufficient activity to effect autocatalytic cleavage. Plasma.

The protein resides in the secreted. It catalyses the reaction Selective cleavage after Arg-223 in complement component C2 (-Ser-Leu-Gly-Arg-|-Lys-Ile-Gln-Ile) and after Arg-76 in complement component C4 (-Gly-Leu-Gln-Arg-|-Ala-Leu-Glu-Ile).. Functionally, serum protease that plays an important role in the activation of the complement system via mannose-binding lectin. After activation by auto-catalytic cleavage it cleaves C2 and C4, leading to their activation and to the formation of C3 convertase. The polypeptide is Mannan-binding lectin serine protease 2 (MASP2) (Homo sapiens (Human)).